Here is a 350-residue protein sequence, read N- to C-terminus: Quinolinate phosphoribosyltransferase [decarboxylating] 1b (350 aa).

Residues arginine 141, 172–174, arginine 196, lysine 206, glutamate 239, aspartate 266, 298–300, and 319–321 contribute to the substrate site; these read TRK, SGN, and SGA.

It belongs to the NadC/ModD family.

The catalysed reaction is nicotinate beta-D-ribonucleotide + CO2 + diphosphate = quinolinate + 5-phospho-alpha-D-ribose 1-diphosphate + 2 H(+). It functions in the pathway alkaloid biosynthesis; nicotine biosynthesis. Its pathway is cofactor biosynthesis; NAD(+) biosynthesis; nicotinate D-ribonucleotide from quinolinate: step 1/1. Its function is as follows. Involved in the biosynthesis of pyridine alkaloid natural products, leading mainly to the production of anabasine, anatabine, nicotine and nornicotine, effective deterrents against herbivores with antiparasitic and pesticide properties (neurotoxins); nornicotine serves as the precursor in the synthesis of the carcinogen compound N'-nitrosonornicotine (NNN). Involved in the catabolism of quinolinic acid (QA). The sequence is that of Quinolinate phosphoribosyltransferase [decarboxylating] 1b from Nicotiana tabacum (Common tobacco).